The sequence spans 623 residues: Glutathione import ATP-binding protein GsiA (623 aa).

ABC transporter domains are found at residues 15-269 (VENL…RALL) and 314-564 (LRVR…RKLL). ATP-binding positions include 49–56 (GESGSGKS) and 357–364 (GESGSGKS).

It belongs to the ABC transporter superfamily. Glutathione importer (TC 3.A.1.5.11) family. The complex is composed of two ATP-binding proteins (GsiA), two transmembrane proteins (GsiC and GsiD) and a solute-binding protein (GsiB).

It localises to the cell inner membrane. It carries out the reaction glutathione(out) + ATP + H2O = glutathione(in) + ADP + phosphate + H(+). Its activity is regulated as follows. Inhibited by verapamil but not by carbonyl cyanide m-chlorophenylhydrazone (CCCP). Its function is as follows. Part of the ABC transporter complex GsiABCD involved in glutathione import. Responsible for energy coupling to the transport system. This is Glutathione import ATP-binding protein GsiA from Escherichia coli (strain K12).